A 1243-amino-acid chain; its full sequence is Plasma membrane calcium-transporting ATPase 2 (1243 aa).

Over residues 1–13 the composition is skewed to polar residues; it reads MGDMTNSDFYSKN. A disordered region spans residues 1-24; it reads MGDMTNSDFYSKNQRNESSHGGEF. Topologically, residues 1 to 94 are cytoplasmic; sequence MGDMTNSDFY…NFIPPKKPKT (94 aa). Residue serine 18 is modified to Phosphoserine. The helical transmembrane segment at 95 to 115 threads the bilayer; sequence FLQLVWEALQDVTLIILEIAA. Residues 116–152 lie on the Extracellular side of the membrane; that stretch reads IISLGLSFYHPPGEGNEGCATAQGGAEDEGEAEAGWI. The helical transmembrane segment at 153-173 threads the bilayer; that stretch reads EGAAILLSVICVVLVTAFNDW. The Cytoplasmic portion of the chain corresponds to 174–390; that stretch reads SKEKQFRGLQ…KEKSVLQGKL (217 aa). Residues 334-381 form a disordered region; that stretch reads GKMQDGNVDASQSKAKQQDGAAAMEMQPLKSAEGGDADDRKKASMHKK. Residues 391 to 410 form a helical membrane-spanning segment; that stretch reads TKLAVQIGKAGLVMSAITVI. Topologically, residues 411–443 are extracellular; sequence ILVLYFTVDTFVVNKKPWLPECTPVYVQYFVKF. Residues 444–461 traverse the membrane as a helical segment; it reads FIIGVTVLVVAVPEGLPL. Topologically, residues 462-875 are cytoplasmic; that stretch reads AVTISLAYSV…MWGRNVYDSI (414 aa). Residue aspartate 499 is the 4-aspartylphosphate intermediate of the active site. Aspartate 820 and aspartate 824 together coordinate Mg(2+). The helical transmembrane segment at 876–895 threads the bilayer; it reads SKFLQFQLTVNVVAVIVAFT. Residues 896–905 lie on the Extracellular side of the membrane; the sequence is GACITQDSPL. The helical transmembrane segment at 906–926 threads the bilayer; that stretch reads KAVQMLWVNLIMDTFASLALA. The Cytoplasmic portion of the chain corresponds to 927–946; the sequence is TEPPTETLLLRKPYGRNKPL. Residues 947–969 traverse the membrane as a helical segment; that stretch reads ISRTMMKNILGHAVYQLALIFTL. Residues 970–987 are Extracellular-facing; it reads LFVGEKMFQIDSGRNAPL. A helical membrane pass occupies residues 988 to 1009; it reads HSPPSEHYTIIFNTFVMMQLFN. Topologically, residues 1010–1028 are cytoplasmic; sequence EINARKIHGERNVFDGIFR. A helical transmembrane segment spans residues 1029–1050; that stretch reads NPIFCTIVLGTFAIQIVIVQFG. Topologically, residues 1051-1060 are extracellular; the sequence is GKPFSCSPLQ. The chain crosses the membrane as a helical span at residues 1061 to 1082; sequence LDQWMWCIFIGLGELVWGQVIA. The Cytoplasmic segment spans residues 1083-1243; that stretch reads TIPTSRLKFL…SPIHSLETSL (161 aa). 3 positions are modified to phosphoserine: glutamate 1120, arginine 1132, and leucine 1134. Residues 1123–1140 form a calmodulin-binding subdomain A region; that stretch reads LRRGQILWFRGLNRIQTQ. Phosphothreonine; by PKC is present on threonine 1139. Residues 1141–1150 form a calmodulin-binding subdomain B region; the sequence is IRVVKAFRSS. Alanine 1146, leucine 1151, serine 1163, histidine 1165, aspartate 1177, and serine 1178 each carry phosphoserine. A Phosphothreonine modification is found at threonine 1188. Residues 1194-1243 are disordered; that stretch reads AALKQNSSPPSSLNKNNSAIDSGINLTTDTSKSATSSSPGSPIHSLETSL. Composition is skewed to low complexity over residues 1196–1211 and 1220–1234; these read LKQN…KNNS and TTDT…SPGS. Serine 1201 carries the post-translational modification Phosphoserine; by PKA. Position 1211 is a phosphoserine (serine 1211).

The protein belongs to the cation transport ATPase (P-type) (TC 3.A.3) family. Type IIB subfamily. Interacts with PDZD11. Mainly expressed in brain cortex. Found in low levels in skeletal muscle, heart muscle, stomach, liver, kidney and lung. Isoforms containing segment B are found in brain cortex and at low levels in other tissues. Isoforms containing segments X and W are found at low levels in all tissues. Isoforms containing segment A and segment Z are found at low levels in skeletal muscle and heart muscle.

It localises to the cell membrane. The protein localises to the synapse. The protein resides in the apical cell membrane. Its subcellular location is the basolateral cell membrane. The catalysed reaction is Ca(2+)(in) + ATP + H2O = Ca(2+)(out) + ADP + phosphate + H(+). Up-regulated by calmodulin which increases the affinity of the pump for Ca(2+) ions. In terms of biological role, ATP-driven Ca(2+) ion pump involved in the maintenance of basal intracellular Ca(2+) levels in specialized cells of cerebellar circuit and vestibular and cochlear systems. Uses ATP as an energy source to transport cytosolic Ca(2+) ions across the plasma membrane to the extracellular compartment. Has fast activation and Ca(2+) clearance rate suited to control fast neuronal Ca(2+) dynamics. At parallel fiber to Purkinje neuron synapse, mediates presynaptic Ca(2+) efflux in response to climbing fiber-induced Ca(2+) rise. Provides for fast return of Ca(2+) concentrations back to their resting levels, ultimately contributing to long-term depression induction and motor learning. Plays an essential role in hearing and balance. In cochlear hair cells, shuttles Ca(2+) ions from stereocilia to the endolymph and dissipates Ca(2+) transients generated by the opening of the mechanoelectrical transduction channels. Regulates Ca(2+) levels in the vestibular system, where it contributes to the formation of otoconia. In non-excitable cells, regulates Ca(2+) signaling through spatial control of Ca(2+) ions extrusion and dissipation of Ca(2+) transients generated by store-operated channels. In lactating mammary gland, allows for the high content of Ca(2+) ions in the milk. In Homo sapiens (Human), this protein is Plasma membrane calcium-transporting ATPase 2.